The chain runs to 456 residues: Bifunctional protein GlmU (456 aa).

The interval Met-1–Arg-229 is pyrophosphorylase. UDP-N-acetyl-alpha-D-glucosamine contacts are provided by residues Leu-11–Gly-14, Lys-25, Gln-76, Gly-81–Thr-82, Tyr-103–Asp-105, Gly-140, Glu-154, Asn-169, and Asn-227. Residue Asp-105 participates in Mg(2+) binding. Asn-227 contributes to the Mg(2+) binding site. Residues Leu-230–Ser-250 form a linker region. The interval Gly-251–Lys-456 is N-acetyltransferase. Residues Arg-333 and Lys-351 each contribute to the UDP-N-acetyl-alpha-D-glucosamine site. The active-site Proton acceptor is His-363. 2 residues coordinate UDP-N-acetyl-alpha-D-glucosamine: Tyr-366 and Asn-377. Acetyl-CoA is bound by residues Ala-380, Asn-386 to Tyr-387, Ser-405, Ala-423, and Arg-440.

In the N-terminal section; belongs to the N-acetylglucosamine-1-phosphate uridyltransferase family. It in the C-terminal section; belongs to the transferase hexapeptide repeat family. In terms of assembly, homotrimer. It depends on Mg(2+) as a cofactor.

The protein localises to the cytoplasm. The catalysed reaction is alpha-D-glucosamine 1-phosphate + acetyl-CoA = N-acetyl-alpha-D-glucosamine 1-phosphate + CoA + H(+). It carries out the reaction N-acetyl-alpha-D-glucosamine 1-phosphate + UTP + H(+) = UDP-N-acetyl-alpha-D-glucosamine + diphosphate. The protein operates within nucleotide-sugar biosynthesis; UDP-N-acetyl-alpha-D-glucosamine biosynthesis; N-acetyl-alpha-D-glucosamine 1-phosphate from alpha-D-glucosamine 6-phosphate (route II): step 2/2. It participates in nucleotide-sugar biosynthesis; UDP-N-acetyl-alpha-D-glucosamine biosynthesis; UDP-N-acetyl-alpha-D-glucosamine from N-acetyl-alpha-D-glucosamine 1-phosphate: step 1/1. Its pathway is bacterial outer membrane biogenesis; LPS lipid A biosynthesis. Its function is as follows. Catalyzes the last two sequential reactions in the de novo biosynthetic pathway for UDP-N-acetylglucosamine (UDP-GlcNAc). The C-terminal domain catalyzes the transfer of acetyl group from acetyl coenzyme A to glucosamine-1-phosphate (GlcN-1-P) to produce N-acetylglucosamine-1-phosphate (GlcNAc-1-P), which is converted into UDP-GlcNAc by the transfer of uridine 5-monophosphate (from uridine 5-triphosphate), a reaction catalyzed by the N-terminal domain. This is Bifunctional protein GlmU from Salmonella gallinarum (strain 287/91 / NCTC 13346).